Here is a 91-residue protein sequence, read N- to C-terminus: MSFDRKQVPNWRPGYRFQYEPAQKGHVLLYPEGMIKLNDSASLIGGLIDGKRDVNAIITELEQQFPGVPEVADDIEQFMEVARGEHWITLA.

This sequence belongs to the PqqD family. In terms of assembly, monomer. Interacts with PqqE.

The protein operates within cofactor biosynthesis; pyrroloquinoline quinone biosynthesis. Functionally, functions as a PqqA binding protein and presents PqqA to PqqE, in the pyrroloquinoline quinone (PQQ) biosynthetic pathway. The protein is PqqA binding protein of Pseudomonas putida (strain W619).